A 67-amino-acid chain; its full sequence is MPGVFLNEDDYNFDIALRRFKKQVEKAGILSEMKKRQHYEKPSVMRKKKKAAARKRLMKKIRKMNMA.

This sequence belongs to the bacterial ribosomal protein bS21 family.

This Desulfovibrio desulfuricans (strain ATCC 27774 / DSM 6949 / MB) protein is Small ribosomal subunit protein bS21.